Here is a 336-residue protein sequence, read N- to C-terminus: N-acetyl-gamma-glutamyl-phosphate reductase (336 aa).

Cys-148 is an active-site residue.

It belongs to the NAGSA dehydrogenase family. Type 1 subfamily.

The protein resides in the cytoplasm. It carries out the reaction N-acetyl-L-glutamate 5-semialdehyde + phosphate + NADP(+) = N-acetyl-L-glutamyl 5-phosphate + NADPH + H(+). The protein operates within amino-acid biosynthesis; L-arginine biosynthesis; N(2)-acetyl-L-ornithine from L-glutamate: step 3/4. In terms of biological role, catalyzes the NADPH-dependent reduction of N-acetyl-5-glutamyl phosphate to yield N-acetyl-L-glutamate 5-semialdehyde. This Campylobacter curvus (strain 525.92) protein is N-acetyl-gamma-glutamyl-phosphate reductase.